The chain runs to 724 residues: MVLTLLFSAYKLCRFFTMSGPRPGADRLTVPGPDRSGGASPWWAAGGRGSREVSPGVGTEVQGALERSLPELQQALSELKQASAARAVGAGLAEVFQLVEEAWLLPAVGREVAQGLCDAIRLDGGLDLLLRLLQAPELETRVQAARLLEQILVAENRDRVARIGLGVILNLAKEREPVELARSVAGILEHMFKHSEETCQRLVAAGGLDAVLYWCRRTDPALLRHCALALANCALHGGQTVQRCMVEKRAAEWLFPLAFSKEDELLRLHACLAVAVLATNKEVEREVEHSGTLALVEPLVASLDPGRFARCLVDASDTSQGRGPDDLQSLVLLLDSSRLEAQCIGAFYLCAEAAIKSLQGKTKVFSDIGAIQSLKRLVSYSTNGTTSALAKRALRLLGEEVPRRILPCVASWKEAEVQTWLQQIGFSQYCENFREQQVDGDLLLRLTDEELQTDLGMKSSITRKRFFRELTELKTFASYATCDRSNLADWLGSLDPRFRQYTYGLVSCGLDRSLLHRVSEQQLLEDCGIRLGVHRTRILSAAREMLHSPLPCTGGKLSGDTPDVFISYRRNSGSQLASLLKVHLQLHGFSVFIDVEKLEAGKFEDKLIQSVIAARNFVLVLSAGALDKCMQDHDCKDWVHKEIVTALSCGKNIVPIIDGFEWPEPQALPEDMQAVLTFNGIKWSHEYQEATIEKIIRFLQGRPSQDSSAGSDTSLEGATPMGLP.

Residues 1 to 27 constitute a mitochondrion transit peptide; sequence MVLTLLFSAYKLCRFFTMSGPRPGADR. The interval 24 to 56 is disordered; the sequence is GADRLTVPGPDRSGGASPWWAAGGRGSREVSPG. Residues 36–45 show a composition bias toward low complexity; sequence SGGASPWWAA. Residues 60–100 form an ARM 1 repeat; it reads EVQGALERSLPELQQALSELKQASAARAVGAGLAEVFQLVE. NAD(+)-binding positions include tryptophan 103, arginine 110, 149–157, and 190–193; these read EQILVAENR and HMFK. ARM repeat units lie at residues 114-153, 155-193, 196-235, 237-280, 281-314, 315-354, and 359-402; these read QGLCDAIRLDGGLDLLLRLLQAPELETRVQAARLLEQILV, ENRDRVARIGLGVILNLAKEREPVELARSVAGILEHMFK, EETCQRLVAAGGLDAVLYWCRRTDPALLRHCALALANCAL, GGQT…LATN, KEVEREVEHSGTLALVEPLVASLDPGRFARCLVD, ASDTSQGRGPDDLQSLVLLLDSSRLEAQCIGAFYLCAEAA, and QGKT…EEVP. SAM domains lie at 412 to 476 and 486 to 548; these read WKEA…LKTF and NLAD…MLHS. Phosphoserine occurs at positions 548 and 558. In terms of domain architecture, TIR spans 560–703; that stretch reads DTPDVFISYR…KIIRFLQGRP (144 aa). Residues 569–570 and glutamate 599 each bind NAD(+); that span reads RR. Glutamate 642 is a catalytic residue. Positions 703–716 are enriched in polar residues; sequence PSQDSSAGSDTSLE. Residues 703 to 724 form a disordered region; it reads PSQDSSAGSDTSLEGATPMGLP.

This sequence belongs to the SARM1 family. As to quaternary structure, homooctamer; forms an octameric ring via SAM domains. Interacts with TICAM1/TRIF and thereby interferes with TICAM1/TRIF function. Interacts with SDC2 (via cytoplasmic domain) and MAPK10/JNK3. Phosphorylation at Ser-548 by JNK kinases (MAPK8, MAPK9 and /or MAPK10) enhance the NAD(+) hydrolase (NADase) activity. Phosphorylation at Ser-548 and subsequent activation takes place in response to oxidative stress conditions and inhibits mitochondrial respiration. In terms of tissue distribution, widely expressed in the brain and neurons (at protein level). Expressed in photoreceptor cells of the neural retina.

It is found in the cytoplasm. It localises to the cell projection. Its subcellular location is the axon. The protein resides in the dendrite. The protein localises to the synapse. It is found in the mitochondrion. The enzyme catalyses NAD(+) + H2O = ADP-D-ribose + nicotinamide + H(+). It catalyses the reaction NAD(+) = cyclic ADP-beta-D-ribose + nicotinamide + H(+). The catalysed reaction is NADP(+) + H2O = ADP-D-ribose 2'-phosphate + nicotinamide + H(+). With respect to regulation, autoinhibited: in the inactive state, the enzymatic TIR domain is held apart by the autoinhibiting ARM repeats. NAD(+)-binding to ARM repeats maintains an inactive state by promoting interaction between ARM repeats and the TIR domain, thereby facilitating inhibition of the enzymatic TIR domain. Following activation, possibly by nicotinamide mononucleotide (NMN), auto-inhibitory interactions are released, allowing self-association of the TIR domains and subsequent activation of the NAD(+) hydrolase (NADase) activity. Self-association of TIR domains is facilitated by the octamer of SAM domains. Functionally, NAD(+) hydrolase, which plays a key role in axonal degeneration following injury by regulating NAD(+) metabolism. Acts as a negative regulator of MYD88- and TRIF-dependent toll-like receptor signaling pathway by promoting Wallerian degeneration, an injury-induced form of programmed subcellular death which involves degeneration of an axon distal to the injury site. Wallerian degeneration is triggered by NAD(+) depletion: in response to injury, SARM1 is activated and catalyzes cleavage of NAD(+) into ADP-D-ribose (ADPR), cyclic ADPR (cADPR) and nicotinamide; NAD(+) cleavage promoting cytoskeletal degradation and axon destruction. Also able to hydrolyze NADP(+), but not other NAD(+)-related molecules. Can activate neuronal cell death in response to stress. Regulates dendritic arborization through the MAPK4-JNK pathway. Involved in innate immune response: inhibits both TICAM1/TRIF- and MYD88-dependent activation of JUN/AP-1, TRIF-dependent activation of NF-kappa-B and IRF3, and the phosphorylation of MAPK14/p38. The polypeptide is NAD(+) hydrolase SARM1 (Mus musculus (Mouse)).